Reading from the N-terminus, the 71-residue chain is Augerpeptide-s7a (71 aa).

Residues 1–20 (MSALKFVLICGLVLLLIETI) form the signal peptide. A propeptide spanning residues 21–29 (PGVSLNLMR) is cleaved from the precursor. 3 disulfides stabilise this stretch: C36–C48, C42–C65, and C47–C68.

Expressed by the venom duct.

It localises to the secreted. Its function is as follows. Elicits an uncoordinated twisting syndrome when injected into C.elegans, but has no effect on mice. The chain is Augerpeptide-s7a from Terebra subulata (Chocolate spotted auger).